The chain runs to 115 residues: Toxin-like structure LSTX-D2 (115 aa).

The N-terminal stretch at 1-22 is a signal peptide; that stretch reads MKVLVLFSVLFLTLFSYSSTEA. Residues 23–44 constitute a propeptide that is removed on maturation; sequence IDEFDSDAEDDMLSLMANEQVR. Intrachain disulfides connect C48/C63, C55/C72, C62/C87, and C74/C85.

Belongs to the neurotoxin 19 (CSTX) family. 01 subfamily. In terms of tissue distribution, expressed by the venom gland.

Its subcellular location is the secreted. The chain is Toxin-like structure LSTX-D2 from Lycosa singoriensis (Wolf spider).